The primary structure comprises 250 residues: MEREEIVSFLDEYLSISSYPDKSSNGLQVEGKEEVERIAFAVDACLDTIAKARAFNADMLIVHHGIIWGGVSYVKGLFAKRLKALLSSEMNLYVAHIPLDVHPEVGNNVQLLKLLNLEPLEPFGEYKGIKIGYIGEFEEPKPLPMIAQILAEKLPVDYVRSYEFGLQEIKRVAVVSGAGGFAIEEASEKADLLITGEISHADYRTAEDLRVSVIAAGHYATETLGVKALMKLVREKFGVKTIFIDSPTGL.

A divalent metal cation-binding residues include His-63, His-64, Asp-100, His-218, and Glu-222.

Belongs to the GTP cyclohydrolase I type 2/NIF3 family. As to quaternary structure, homohexamer.

The polypeptide is GTP cyclohydrolase 1 type 2 homolog (Pyrococcus abyssi (strain GE5 / Orsay)).